Consider the following 282-residue polypeptide: ATP synthase subunit a (282 aa).

Transmembrane regions (helical) follow at residues 38 to 58 (VDSM…LWLA), 97 to 117 (FVAP…AMDM), 145 to 165 (VVPT…LLLC), 187 to 207 (FGSH…EFVA), 225 to 247 (LIFI…GHIV), and 261 to 281 (TLQA…AHEG).

It belongs to the ATPase A chain family. F-type ATPases have 2 components, CF(1) - the catalytic core - and CF(0) - the membrane proton channel. CF(1) has five subunits: alpha(3), beta(3), gamma(1), delta(1), epsilon(1). CF(0) has three main subunits: a(1), b(2) and c(9-12). The alpha and beta chains form an alternating ring which encloses part of the gamma chain. CF(1) is attached to CF(0) by a central stalk formed by the gamma and epsilon chains, while a peripheral stalk is formed by the delta and b chains.

It localises to the cell inner membrane. Key component of the proton channel; it plays a direct role in the translocation of protons across the membrane. This Azoarcus sp. (strain BH72) protein is ATP synthase subunit a.